The primary structure comprises 225 residues: Uracil-DNA glycosylase (225 aa).

Asp65 acts as the Proton acceptor in catalysis.

Belongs to the uracil-DNA glycosylase (UDG) superfamily. UNG family.

It is found in the cytoplasm. The enzyme catalyses Hydrolyzes single-stranded DNA or mismatched double-stranded DNA and polynucleotides, releasing free uracil.. Its function is as follows. Excises uracil residues from the DNA which can arise as a result of misincorporation of dUMP residues by DNA polymerase or due to deamination of cytosine. The sequence is that of Uracil-DNA glycosylase from Bacillus cereus (strain B4264).